Here is a 316-residue protein sequence, read N- to C-terminus: MSSATFLSVMAGLSGIVVFGALISVFHIYSDINSFVEDSHRELGEFKGFANDAWNSMINQDDSVRMARSVFGRRRQKKQSQCNCGQQASNCPAGPPGPPGASGDKGHDGQPGQAGKPGQPGVAGPSHHQKQECIKCPQGLPGPAGVPGQPGPKGPNGNPGAPAQGGGQGPPGPPGPAGSAGSPGQAGAPGNPGSPGKSGQRGRGLPGPSGAPGPQGPPGAPGQPGSGNAPGPAGPPGPAGPNGQPGHPGQDGQPGAPGNDGTPGSDAAYCPCPTRSSVLRHRNVNRHRAAASKKRVVAKKRVAKKRVVAARRHVQA.

Positions 1 to 34 are cleaved as a signal peptide; that stretch reads MSSATFLSVMAGLSGIVVFGALISVFHIYSDINS. Disordered regions lie at residues 78 to 269 and 281 to 316; these read KQSQ…DAAY and HRNVNRHRAAASKKRVVAKKRVAKKRVVAARRHVQA. Residues 79-90 are compositionally biased toward polar residues; the sequence is QSQCNCGQQASN. 3 triple-helical region regions span residues 94-126, 139-198, and 204-263; these read GPPGPPGASGDKGHDGQPGQAGKPGQPGVAGPS, GLPG…PGKS, and GLPG…DGTP. Low complexity-rich tracts occupy residues 110–125, 137–147, and 177–198; these read QPGQAGKPGQPGVAGP, PQGLPGPAGVP, and AGSAGSPGQAGAPGNPGSPGKS. A compositionally biased stretch (pro residues) spans 209–221; that stretch reads SGAPGPQGPPGAP. The span at 241–260 shows a compositional bias: low complexity; the sequence is PNGQPGHPGQDGQPGAPGND.

It belongs to the cuticular collagen family. In terms of assembly, collagen polypeptide chains are complexed within the cuticle by disulfide bonds and other types of covalent cross-links.

Its function is as follows. Nematode cuticles are composed largely of collagen-like proteins. The cuticle functions both as an exoskeleton and as a barrier to protect the worm from its environment. This Caenorhabditis elegans protein is Cuticle collagen 7 (col-7).